The following is a 528-amino-acid chain: MQATKSQALFVNFLGNSPKWYKYAIMAFLVINPLLFFYVSPFVAGWVLVVEFIFTLAMALKCYPLQPGGLLAIQAVFIGMTSPSQVLHEIEANLEVLLLLVFMVAGIYFMKQLLLFVFTKMITKVRSKIIVSLMFCTASAFLSAFLDALTVIAVIIAVAVGFYSIYHKVASGKSFNDGHDHTSETTEQLNNEELEAFRAFLRNLLMHSGIGTALGGVCTMVGEPQNLIIAAQAHWQFGEFFLRMSPVTMPVLVAGIFTCFLVEKFKVFGYGAQLPGAVHKILTDYANHEDSHRTNQDKMKLVVQALIGVWLIAGLALHLASVGLIGLSVIILATAFNGITDEHSLGKAFEEALPFTALLAVFFAIVGVIIDQELFAPVIQWALGYEGNMQLVIFYIANGLLSMVSDNVFVGTVYINEVKAALMSGQITRDQFDLLAVAINTGTNLPSVATPNGQAAFLFLLTSAIAPLIRLSYGRMVWMALPYTIVLSIVGVMAIESGFLVDMTDVLYETQLIIHHSAKDISGAVMGH.

Helical transmembrane passes span F28–V50, P67–L87, L98–F118, A140–V160, F240–F260, A305–I325, E350–I370, L391–G411, A449–I469, and M476–E496.

It belongs to the NhaB Na(+)/H(+) (TC 2.A.34) antiporter family.

Its subcellular location is the cell inner membrane. The catalysed reaction is 2 Na(+)(in) + 3 H(+)(out) = 2 Na(+)(out) + 3 H(+)(in). Its function is as follows. Na(+)/H(+) antiporter that extrudes sodium in exchange for external protons. The protein is Na(+)/H(+) antiporter NhaB of Shewanella frigidimarina (strain NCIMB 400).